The primary structure comprises 754 residues: Probable galactinol--sucrose galactosyltransferase 1 (754 aa).

This sequence belongs to the glycosyl hydrolases 36 family.

The catalysed reaction is alpha-D-galactosyl-(1-&gt;3)-1D-myo-inositol + sucrose = raffinose + myo-inositol. In terms of biological role, transglycosidase operating by a ping-pong reaction mechanism. Involved in the synthesis of raffinose, a major soluble carbohydrate in seeds, roots and tubers. The polypeptide is Probable galactinol--sucrose galactosyltransferase 1 (RFS1) (Arabidopsis thaliana (Mouse-ear cress)).